A 112-amino-acid polypeptide reads, in one-letter code: Putative inner membrane protein YafU (112 aa).

The Cytoplasmic portion of the chain corresponds to 1–21 (MSSERDLVNFLGDFSMDVAKA). The chain crosses the membrane as a helical span at residues 22–42 (VIAGGVATAIGSLASFACVSF). Residue Gly43 is a topological domain, periplasmic. The helical transmembrane segment at 44 to 64 (FPVILVGGAILLTGIVCTVVL) threads the bilayer. At 65–112 (NEIDAQCHLSEKLKYAIRDGLKRQQELDKWKRENMTPFMYVLNTPPVI) the chain is on the cytoplasmic side.

It localises to the cell inner membrane. This is Putative inner membrane protein YafU (yafU) from Escherichia coli (strain K12).